Here is a 429-residue protein sequence, read N- to C-terminus: Small ribosomal subunit protein bS1 (429 aa).

S1 motif domains are found at residues 55–128 (GDVV…LSKK), 144–211 (GDTV…SRKA), 231–299 (GEVV…LSIK), and 316–385 (GSVL…LSMK). The segment covering 382–399 (LSMKALEEKPEREDRRGN) has biased composition (basic and acidic residues). Residues 382 to 412 (LSMKALEEKPEREDRRGNDGSASRADIAAYK) form a disordered region.

The protein belongs to the bacterial ribosomal protein bS1 family.

Functionally, binds mRNA; thus facilitating recognition of the initiation point. It is needed to translate mRNA with a short Shine-Dalgarno (SD) purine-rich sequence. This is Small ribosomal subunit protein bS1 (rps1) from Leuconostoc lactis.